The primary structure comprises 215 residues: Leucyl/phenylalanyl-tRNA--protein transferase (215 aa).

The protein belongs to the L/F-transferase family.

Its subcellular location is the cytoplasm. It catalyses the reaction N-terminal L-lysyl-[protein] + L-leucyl-tRNA(Leu) = N-terminal L-leucyl-L-lysyl-[protein] + tRNA(Leu) + H(+). The catalysed reaction is N-terminal L-arginyl-[protein] + L-leucyl-tRNA(Leu) = N-terminal L-leucyl-L-arginyl-[protein] + tRNA(Leu) + H(+). It carries out the reaction L-phenylalanyl-tRNA(Phe) + an N-terminal L-alpha-aminoacyl-[protein] = an N-terminal L-phenylalanyl-L-alpha-aminoacyl-[protein] + tRNA(Phe). Functionally, functions in the N-end rule pathway of protein degradation where it conjugates Leu, Phe and, less efficiently, Met from aminoacyl-tRNAs to the N-termini of proteins containing an N-terminal arginine or lysine. In Campylobacter jejuni subsp. doylei (strain ATCC BAA-1458 / RM4099 / 269.97), this protein is Leucyl/phenylalanyl-tRNA--protein transferase.